The primary structure comprises 432 residues: tRNA(Ile)-lysidine synthase (432 aa).

20–25 lines the ATP pocket; that stretch reads SGGLDS.

This sequence belongs to the tRNA(Ile)-lysidine synthase family.

The protein localises to the cytoplasm. The enzyme catalyses cytidine(34) in tRNA(Ile2) + L-lysine + ATP = lysidine(34) in tRNA(Ile2) + AMP + diphosphate + H(+). Ligates lysine onto the cytidine present at position 34 of the AUA codon-specific tRNA(Ile) that contains the anticodon CAU, in an ATP-dependent manner. Cytidine is converted to lysidine, thus changing the amino acid specificity of the tRNA from methionine to isoleucine. This Shigella flexneri protein is tRNA(Ile)-lysidine synthase.